Reading from the N-terminus, the 256-residue chain is uncharacterized protein (256 aa).

An N-terminal signal peptide occupies residues 1–22 (MGYLKRIGMCISLLIVIIFVTS). Residue cysteine 23 is the site of N-palmitoyl cysteine attachment. Cysteine 23 carries the S-diacylglycerol cysteine lipid modification.

Belongs to the staphylococcal tandem lipoprotein family.

The protein resides in the cell membrane. This is an uncharacterized protein from Staphylococcus aureus (strain MRSA252).